A 343-amino-acid chain; its full sequence is UDP-3-O-acylglucosamine N-acyltransferase (343 aa).

The active-site Proton acceptor is His-239.

Belongs to the transferase hexapeptide repeat family. LpxD subfamily. As to quaternary structure, homotrimer.

The catalysed reaction is a UDP-3-O-[(3R)-3-hydroxyacyl]-alpha-D-glucosamine + a (3R)-hydroxyacyl-[ACP] = a UDP-2-N,3-O-bis[(3R)-3-hydroxyacyl]-alpha-D-glucosamine + holo-[ACP] + H(+). It functions in the pathway bacterial outer membrane biogenesis; LPS lipid A biosynthesis. Catalyzes the N-acylation of UDP-3-O-acylglucosamine using 3-hydroxyacyl-ACP as the acyl donor. Is involved in the biosynthesis of lipid A, a phosphorylated glycolipid that anchors the lipopolysaccharide to the outer membrane of the cell. This chain is UDP-3-O-acylglucosamine N-acyltransferase, found in Vibrio vulnificus (strain YJ016).